Here is a 580-residue protein sequence, read N- to C-terminus: MFS-type transporter thnB (580 aa).

The interval 1-33 is disordered; that stretch reads MSGDYSATRKSENVDTSTTASQEDSSLAPEQPE. The segment covering 14-25 has biased composition (polar residues); that stretch reads VDTSTTASQEDS. The next 7 membrane-spanning stretches (helical) occupy residues 60–80, 92–112, 125–145, 157–177, 188–208, 216–236, and 259–279; these read LITLVLAINLAMFLASLDQTI, FHGLSQVSWYGSAYFMCLGGF, LKISFAIAVFVFELGSLICGV, AIAGIGGAGITSGSTVILAFS, STMGVTYCIAFILGPLIGGAF, WCFYINLPIGGLAMALFFLFF, and VGTVLAMGGIISFILALQYAG. N-linked (GlcNAc...) asparagine glycosylation occurs at Asn-285. Transmembrane regions (helical) follow at residues 286 to 306, 331 to 351, 364 to 384, 389 to 409, 421 to 441, 457 to 477, and 529 to 549; these read SSVVIGLLVGFVLIMVTLAAW, IFQFFFVGCYFLLLFYLPIYF, VDNLPLVLSACLFIILGGAAV, MATPYMTAGSAVAAVATGLLY, IGYQVLVGAGLAFPFQNALNI, SLYFFQILGGAFSISAAQAAF, and FAVSVGLVGMAFLSSLHMVMI.

This sequence belongs to the major facilitator superfamily.

The protein localises to the membrane. MFS-type transporter; part of the gene cluster that produces the tetronate natural products trihazones. The sequence is that of MFS-type transporter thnB from Trichoderma harzianum (Hypocrea lixii).